A 275-amino-acid chain; its full sequence is Translation initiation factor 2 subunit alpha (275 aa).

An S1 motif domain is found at 12–83 (GEFVVATVKR…RKGHIDLSLR (72 aa)).

The protein belongs to the eIF-2-alpha family. Heterotrimer composed of an alpha, a beta and a gamma chain.

EIF-2 functions in the early steps of protein synthesis by forming a ternary complex with GTP and initiator tRNA. This is Translation initiation factor 2 subunit alpha (eif2a) from Pyrococcus horikoshii (strain ATCC 700860 / DSM 12428 / JCM 9974 / NBRC 100139 / OT-3).